Consider the following 177-residue polypeptide: Ribulose bisphosphate carboxylase small subunit, chloroplastic 6 (177 aa).

Residues 1-56 (MASSMMASTAAVARVGPAQTNMVAPFNGLRSSVAFPATRKANNDLSTLPSNGGRVS) constitute a chloroplast transit peptide.

Belongs to the RuBisCO small chain family. As to quaternary structure, heterohexadecamer of 8 large and 8 small subunits.

The protein resides in the plastid. It localises to the chloroplast. In terms of biological role, ruBisCO catalyzes two reactions: the carboxylation of D-ribulose 1,5-bisphosphate, the primary event in carbon dioxide fixation, as well as the oxidative fragmentation of the pentose substrate. Both reactions occur simultaneously and in competition at the same active site. Although the small subunit is not catalytic it is essential for maximal activity. This chain is Ribulose bisphosphate carboxylase small subunit, chloroplastic 6, found in Lemna gibba (Swollen duckweed).